The sequence spans 85 residues: UPF0335 protein Atu3758 (85 aa).

The protein belongs to the UPF0335 family.

The chain is UPF0335 protein Atu3758 from Agrobacterium fabrum (strain C58 / ATCC 33970) (Agrobacterium tumefaciens (strain C58)).